The sequence spans 216 residues: MPIGVPKVPYRIPGDEEATWVDLYNVMYRERTLFLGQEIRCEITNHITGLMVYLSIEDGNSDIFLFINSPGGWLISGMAIFDTMQTVTPDIYTICLGIAASMASFILLGGEPTKRIAFPHARIMLHQPASAYYRARTPEFLLEVEELHKVREMITRVYALRTGKPFWVVSEDMERDVFMSADEAKAYGLVDIVGDEMIDEHCDTDPVWFPEMFKDW.

The active-site Nucleophile is S101. H126 is an active-site residue.

This sequence belongs to the peptidase S14 family. Component of the chloroplastic Clp protease core complex.

It localises to the plastid. Its subcellular location is the chloroplast stroma. The enzyme catalyses Hydrolysis of proteins to small peptides in the presence of ATP and magnesium. alpha-casein is the usual test substrate. In the absence of ATP, only oligopeptides shorter than five residues are hydrolyzed (such as succinyl-Leu-Tyr-|-NHMec, and Leu-Tyr-Leu-|-Tyr-Trp, in which cleavage of the -Tyr-|-Leu- and -Tyr-|-Trp bonds also occurs).. Cleaves peptides in various proteins in a process that requires ATP hydrolysis. Has a chymotrypsin-like activity. Plays a major role in the degradation of misfolded proteins. The protein is ATP-dependent Clp protease proteolytic subunit of Saccharum hybrid (Sugarcane).